Here is an 89-residue protein sequence, read N- to C-terminus: Small ribosomal subunit protein uS15 (89 aa).

Belongs to the universal ribosomal protein uS15 family. As to quaternary structure, part of the 30S ribosomal subunit. Forms a bridge to the 50S subunit in the 70S ribosome, contacting the 23S rRNA.

One of the primary rRNA binding proteins, it binds directly to 16S rRNA where it helps nucleate assembly of the platform of the 30S subunit by binding and bridging several RNA helices of the 16S rRNA. Functionally, forms an intersubunit bridge (bridge B4) with the 23S rRNA of the 50S subunit in the ribosome. The protein is Small ribosomal subunit protein uS15 of Shewanella putrefaciens (strain CN-32 / ATCC BAA-453).